The primary structure comprises 327 residues: Annexin A8 (327 aa).

Annexin repeat units follow at residues 21-92 (FNPD…ALMY), 93-164 (PPYR…CLLQ), 177-249 (GLAL…TVVK), and 253-324 (NLHS…SLVG). Residues Met266, Gly268, Gly270, and Asp310 each contribute to the Ca(2+) site.

Belongs to the annexin family.

Functionally, this protein is an anticoagulant protein that acts as an indirect inhibitor of the thromboplastin-specific complex, which is involved in the blood coagulation cascade. This Homo sapiens (Human) protein is Annexin A8.